The sequence spans 379 residues: Endonuclease III homolog 1, chloroplastic (379 aa).

Residues 1-54 (MILLVNGGAATSIHPNAARFYRIGTMSRQIHGAVSSSKHISLKTQHPLSDSNSE) constitute a chloroplast transit peptide. One can recognise a HhH domain in the interval 244–272 (KYDGDIPSSLDDLLSLPGIGPKMAHLILH). The active-site Nucleophile; for N-glycosylase activity is the Lys265. [4Fe-4S] cluster-binding residues include Cys340, Cys347, Cys350, and Cys356.

It belongs to the Nth/MutY family. [4Fe-4S] cluster serves as cofactor. Expressed at low levels in roots, stems, leaves and flowers.

Its subcellular location is the plastid. It is found in the chloroplast stroma. The protein resides in the chloroplast nucleoid. It catalyses the reaction 2'-deoxyribonucleotide-(2'-deoxyribose 5'-phosphate)-2'-deoxyribonucleotide-DNA = a 3'-end 2'-deoxyribonucleotide-(2,3-dehydro-2,3-deoxyribose 5'-phosphate)-DNA + a 5'-end 5'-phospho-2'-deoxyribonucleoside-DNA + H(+). Its function is as follows. Bifunctional DNA N-glycosylase with associated apurinic/apyrimidinic (AP) lyase function that catalyzes the first step in base excision repair (BER), the primary repair pathway for the repair of oxidative DNA damage. The DNA N-glycosylase activity releases the damaged DNA base from DNA by cleaving the N-glycosidic bond, leaving an AP site. The AP lyase activity cleaves the phosphodiester bond 3' to the AP site by a beta-elimination. Primarily recognizes and repairs oxidative base damage of pyrimidines. This Arabidopsis thaliana (Mouse-ear cress) protein is Endonuclease III homolog 1, chloroplastic.